The chain runs to 185 residues: MNWRSEHVWVELLKGSRKRGNFFWACILFLGSLGFLSVGASSYLGKNIISILPSQQILFFPQGVVMSFYGIAGLFISSYLWCTILWNVGSGYDRFDRKEGIVCIFRWGFPGIKRRVFLQFLMRDIQSIRIQVKEGLYPRRILYMEIRGQGVIPLTRTDEKFFTPREIEQKAAELAYFLRVPIEVF.

A run of 2 helical transmembrane segments spans residues 20–40 (GNFFWACILFLGSLGFLSVGA) and 57–77 (ILFFPQGVVMSFYGIAGLFIS).

The protein belongs to the Ycf4 family.

The protein resides in the plastid. Its subcellular location is the chloroplast thylakoid membrane. Its function is as follows. Seems to be required for the assembly of the photosystem I complex. The chain is Photosystem I assembly protein Ycf4 from Agrostis stolonifera (Creeping bentgrass).